Consider the following 185-residue polypeptide: ATP-dependent protease subunit HslV (185 aa).

Threonine 12 is an active-site residue. Na(+) is bound by residues alanine 168, cysteine 171, and threonine 174.

It belongs to the peptidase T1B family. HslV subfamily. A double ring-shaped homohexamer of HslV is capped on each side by a ring-shaped HslU homohexamer. The assembly of the HslU/HslV complex is dependent on binding of ATP.

It is found in the cytoplasm. The catalysed reaction is ATP-dependent cleavage of peptide bonds with broad specificity.. Allosterically activated by HslU binding. Protease subunit of a proteasome-like degradation complex believed to be a general protein degrading machinery. The protein is ATP-dependent protease subunit HslV of Dinoroseobacter shibae (strain DSM 16493 / NCIMB 14021 / DFL 12).